Here is a 62-residue protein sequence, read N- to C-terminus: Translational regulator CsrA (62 aa).

Belongs to the CsrA/RsmA family. As to quaternary structure, homodimer; the beta-strands of each monomer intercalate to form a hydrophobic core, while the alpha-helices form wings that extend away from the core.

The protein localises to the cytoplasm. Its function is as follows. A key translational regulator that binds mRNA to regulate translation initiation and/or mRNA stability. Mediates global changes in gene expression, shifting from rapid growth to stress survival by linking envelope stress, the stringent response and the catabolite repression systems. Usually binds in the 5'-UTR; binding at or near the Shine-Dalgarno sequence prevents ribosome-binding, repressing translation, binding elsewhere in the 5'-UTR can activate translation and/or stabilize the mRNA. Its function is antagonized by small RNA(s). The chain is Translational regulator CsrA from Pasteurella multocida (strain Pm70).